Here is a 37-residue protein sequence, read N- to C-terminus: Large ribosomal subunit protein bL36c (37 aa).

This sequence belongs to the bacterial ribosomal protein bL36 family.

It is found in the plastid. It localises to the chloroplast. The sequence is that of Large ribosomal subunit protein bL36c from Chaetosphaeridium globosum (Charophycean green alga).